We begin with the raw amino-acid sequence, 219 residues long: Ribosome hibernation promotion factor (219 aa).

Belongs to the HPF/YfiA ribosome-associated protein family. Long HPF subfamily. In terms of assembly, interacts with 100S ribosomes.

It localises to the cytoplasm. Required for dimerization of active 70S ribosomes into 100S ribosomes in stationary phase; 100S ribosomes are translationally inactive and sometimes present during exponential growth. In Mycobacterium tuberculosis (strain ATCC 25618 / H37Rv), this protein is Ribosome hibernation promotion factor.